Consider the following 593-residue polypeptide: Mitoguardin 2 (593 aa).

A run of 2 helical transmembrane segments spans residues M11 to G31 and P42 to A62. Disordered regions lie at residues K101–S134 and L195–S228. A compositionally biased stretch (polar residues) spans R107 to I123. Residues S124–S134 are compositionally biased toward low complexity. Position 132 is a phosphoserine (S132). T206 is subject to Phosphothreonine. Phosphoserine is present on residues S220, S224, and S228. At T273 the chain carries Phosphothreonine. S276 and S295 each carry phosphoserine. An FFAT motif is present at residues S292–E298. The chain crosses the membrane as a helical span at residues I563–P583.

Belongs to the mitoguardin family. As to quaternary structure, homodimer and heterodimer; forms heterodimers with MIGA1. Interacts with PLD6/MitoPLD. Interacts (via phosphorylated FFAT motif) with MOSPD2. In terms of processing, phosphorylation at Ser-295 of the FFAT motif activates interaction with MOSPD2.

The protein resides in the mitochondrion outer membrane. Its function is as follows. Regulator of mitochondrial fusion: acts by forming homo- and heterodimers at the mitochondrial outer membrane and facilitating the formation of PLD6/MitoPLD dimers. May act by regulating phospholipid metabolism via PLD6/MitoPLD. This is Mitoguardin 2 from Bos taurus (Bovine).